The chain runs to 122 residues: Small ribosomal subunit protein uS8c (122 aa).

This sequence belongs to the universal ribosomal protein uS8 family. Part of the 30S ribosomal subunit.

It is found in the plastid. The protein resides in the chloroplast. Functionally, one of the primary rRNA binding proteins, it binds directly to 16S rRNA central domain where it helps coordinate assembly of the platform of the 30S subunit. The protein is Small ribosomal subunit protein uS8c (rps8) of Ostreococcus tauri.